A 337-amino-acid chain; its full sequence is Probable dual-specificity RNA methyltransferase RlmN (337 aa).

Glu88 (proton acceptor) is an active-site residue. A Radical SAM core domain is found at 94–324 (SEKRLTVCVS…VRYSRGLATD (231 aa)). Cys101 and Cys327 are oxidised to a cystine. [4Fe-4S] cluster contacts are provided by Cys108, Cys112, and Cys115. Residues 155 to 156 (GE), Ser185, 208 to 210 (SLH), and Asn284 contribute to the S-adenosyl-L-methionine site. Cys327 acts as the S-methylcysteine intermediate in catalysis.

This sequence belongs to the radical SAM superfamily. RlmN family. The cofactor is [4Fe-4S] cluster.

The protein localises to the cytoplasm. The enzyme catalyses adenosine(2503) in 23S rRNA + 2 reduced [2Fe-2S]-[ferredoxin] + 2 S-adenosyl-L-methionine = 2-methyladenosine(2503) in 23S rRNA + 5'-deoxyadenosine + L-methionine + 2 oxidized [2Fe-2S]-[ferredoxin] + S-adenosyl-L-homocysteine. It carries out the reaction adenosine(37) in tRNA + 2 reduced [2Fe-2S]-[ferredoxin] + 2 S-adenosyl-L-methionine = 2-methyladenosine(37) in tRNA + 5'-deoxyadenosine + L-methionine + 2 oxidized [2Fe-2S]-[ferredoxin] + S-adenosyl-L-homocysteine. Its function is as follows. Specifically methylates position 2 of adenine 2503 in 23S rRNA and position 2 of adenine 37 in tRNAs. This Microcystis aeruginosa (strain NIES-843 / IAM M-2473) protein is Probable dual-specificity RNA methyltransferase RlmN.